The primary structure comprises 77 residues: U8-lycotoxin-Ls1e (77 aa).

The signal sequence occupies residues 1 to 20 (MKLIIFTGLVLFAIVSLIEA). A propeptide spanning residues 21–26 (QAENEK) is cleaved from the precursor.

The protein belongs to the neurotoxin 19 (CSTX) family. 08 (U8-Lctx) subfamily. Contains 4 disulfide bonds. In terms of tissue distribution, expressed by the venom gland.

Its subcellular location is the secreted. In Lycosa singoriensis (Wolf spider), this protein is U8-lycotoxin-Ls1e.